A 544-amino-acid polypeptide reads, in one-letter code: Coiled-coil domain-containing protein 82 (544 aa).

The span at 1–14 (MIHVRRHETRRNSK) shows a compositional bias: basic residues. The tract at residues 1–294 (MIHVRRHETR…ESDEDGDDYI (294 aa)) is disordered. Residues 16–27 (HVPEQKSRVDWR) show a composition bias toward basic and acidic residues. Acidic residues predominate over residues 39-67 (DSDEELDSEEFDSDEELDSDESFENDEEL). Ser88, Ser131, Ser154, Ser195, and Ser219 each carry phosphoserine. The span at 88–108 (SKIQSEGNDSKCLINSGNGST) shows a compositional bias: polar residues. Over residues 112 to 132 (ETNKIKHRNIDLQDQEKHLSQ) the composition is skewed to basic and acidic residues. The segment covering 223-248 (MEQKTPEKTLAAQKREKLQKLKELSK) has biased composition (basic and acidic residues). Residue Thr227 is modified to Phosphothreonine. Residues 229-256 (EKTLAAQKREKLQKLKELSKQRSRQRRS) adopt a coiled-coil conformation. Residues 273-294 (DEVDEEEEEDNYESDEDGDDYI) are compositionally biased toward acidic residues. Ser329 carries the post-translational modification Phosphoserine.

The protein is Coiled-coil domain-containing protein 82 (CCDC82) of Homo sapiens (Human).